The chain runs to 503 residues: Maturase K (503 aa).

The protein belongs to the intron maturase 2 family. MatK subfamily.

The protein localises to the plastid. Its subcellular location is the chloroplast. Functionally, usually encoded in the trnK tRNA gene intron. Probably assists in splicing its own and other chloroplast group II introns. In Syzygium anisatum (Aniseed myrtle), this protein is Maturase K.